The sequence spans 127 residues: Large ribosomal subunit protein bL17 (127 aa).

It belongs to the bacterial ribosomal protein bL17 family. In terms of assembly, part of the 50S ribosomal subunit. Contacts protein L32.

The polypeptide is Large ribosomal subunit protein bL17 (Legionella pneumophila (strain Corby)).